We begin with the raw amino-acid sequence, 138 residues long: Putative pre-16S rRNA nuclease (138 aa).

The protein belongs to the YqgF nuclease family.

The protein resides in the cytoplasm. Could be a nuclease involved in processing of the 5'-end of pre-16S rRNA. This chain is Putative pre-16S rRNA nuclease, found in Escherichia coli O7:K1 (strain IAI39 / ExPEC).